A 465-amino-acid polypeptide reads, in one-letter code: Ribosomal oxygenase 2 (465 aa).

Positions 139–271 (QPQRFKDELW…NSWGDFLLDT (133 aa)) constitute a JmjC domain. Fe cation is bound by residues His-179, Asp-181, and His-240. Ser-309 is modified (phosphoserine).

It belongs to the ROX family. MINA53 subfamily. Requires Fe(2+) as cofactor. Expressed in liver, skeletal muscle, heart, pancreas, and placenta. Not detected in brain, lung or kidney. Expressed in several lung cancer tissues, but is barely detected in the adjacent non-cancerous tissues. Also highly expressed in several esophageal squamous cell carcinoma (ESCC), and colon cancer tissues, and in various cancer cell lines.

It is found in the nucleus. The protein localises to the nucleolus. It catalyses the reaction L-histidyl-[protein] + 2-oxoglutarate + O2 = (3S)-3-hydroxy-L-histidyl-[protein] + succinate + CO2. The catalysed reaction is L-histidyl-[ribosomal protein uL15] + 2-oxoglutarate + O2 = (3S)-3-hydroxy-L-histidyl-[ribosomal protein uL15] + succinate + CO2. Oxygenase that can act as both a histone lysine demethylase and a ribosomal histidine hydroxylase. Is involved in the demethylation of trimethylated 'Lys-9' on histone H3 (H3K9me3), leading to an increase in ribosomal RNA expression. Also catalyzes the hydroxylation of 60S ribosomal protein L27a on 'His-39'. May play an important role in cell growth and survival. May be involved in ribosome biogenesis, most likely during the assembly process of pre-ribosomal particles. The polypeptide is Ribosomal oxygenase 2 (Homo sapiens (Human)).